The sequence spans 189 residues: Elongation factor P (189 aa).

Lys34 bears the N6-(3,6-diaminohexanoyl)-5-hydroxylysine mark.

It belongs to the elongation factor P family. Post-translationally, may be beta-lysylated on the epsilon-amino group of Lys-34 by the combined action of EpmA and EpmB, and then hydroxylated on the C5 position of the same residue by EpmC (if this protein is present). Lysylation is critical for the stimulatory effect of EF-P on peptide-bond formation. The lysylation moiety may extend toward the peptidyltransferase center and stabilize the terminal 3-CCA end of the tRNA. Hydroxylation of the C5 position on Lys-34 may allow additional potential stabilizing hydrogen-bond interactions with the P-tRNA.

Its subcellular location is the cytoplasm. It functions in the pathway protein biosynthesis; polypeptide chain elongation. Its function is as follows. Involved in peptide bond synthesis. Alleviates ribosome stalling that occurs when 3 or more consecutive Pro residues or the sequence PPG is present in a protein, possibly by augmenting the peptidyl transferase activity of the ribosome. Modification of Lys-34 is required for alleviation. The chain is Elongation factor P from Francisella tularensis subsp. tularensis (strain FSC 198).